The following is a 279-amino-acid chain: Tryptophan 2,3-dioxygenase (279 aa).

Substrate-binding positions include 48–52 (FIVIH), tyrosine 110, and arginine 114. Histidine 237 serves as a coordination point for heme. Threonine 251 is a binding site for substrate.

This sequence belongs to the tryptophan 2,3-dioxygenase family. As to quaternary structure, homotetramer. The cofactor is heme.

The enzyme catalyses L-tryptophan + O2 = N-formyl-L-kynurenine. It participates in amino-acid degradation; L-tryptophan degradation via kynurenine pathway; L-kynurenine from L-tryptophan: step 1/2. Functionally, heme-dependent dioxygenase that catalyzes the oxidative cleavage of the L-tryptophan (L-Trp) pyrrole ring and converts L-tryptophan to N-formyl-L-kynurenine. Catalyzes the oxidative cleavage of the indole moiety. The sequence is that of Tryptophan 2,3-dioxygenase from Bacillus thuringiensis subsp. konkukian (strain 97-27).